A 339-amino-acid chain; its full sequence is Protein RETICULATA-RELATED 2, chloroplastic (339 aa).

Residues methionine 1–proline 58 constitute a chloroplast transit peptide. The segment covering isoleucine 68–glycine 86 has biased composition (gly residues). Positions isoleucine 68 to serine 92 are disordered. 2 consecutive transmembrane segments (helical) span residues phenylalanine 148 to alanine 168 and valine 213 to isoleucine 233.

The protein belongs to the RETICULATA family.

It localises to the plastid. It is found in the chloroplast membrane. In terms of biological role, may play a role in leaf development. The protein is Protein RETICULATA-RELATED 2, chloroplastic of Arabidopsis thaliana (Mouse-ear cress).